The sequence spans 1159 residues: PAN2-PAN3 deadenylation complex catalytic subunit pan2 (1159 aa).

The WD repeat unit spans residues 276 to 315 (ANVSFMLGIDISPSGEALAINDAECMVHLWGSPAKIHFNE). Residues 316 to 451 (MSKEVELADV…GAKLNGEAED (136 aa)) form a linker region. The USP domain occupies 452-821 (DPLLKYSNVE…VPCVLAFQVK (370 aa)). Residues 872–1048 (LDTEFVDLEK…IEDARMALRL (177 aa)) enclose the Exonuclease domain. Aspartate 873, glutamate 875, aspartate 982, and aspartate 1041 together coordinate a divalent metal cation. A disordered region spans residues 1094-1159 (TAVTMQNTNS…GDFFGGSPLK (66 aa)). The segment covering 1096-1106 (VTMQNTNSGRN) has biased composition (polar residues). Residues 1107–1128 (TPTVPDAAGAPAVPASAPTTPG) show a composition bias toward low complexity. Positions 1143–1153 (TFSGPGAGDFF) are enriched in gly residues.

Belongs to the peptidase C19 family. PAN2 subfamily. In terms of assembly, forms a heterotrimer with an asymmetric homodimer of the regulatory subunit pan3 to form the poly(A)-nuclease (PAN) deadenylation complex. A divalent metal cation is required as a cofactor.

It is found in the cytoplasm. The catalysed reaction is Exonucleolytic cleavage of poly(A) to 5'-AMP.. With respect to regulation, positively regulated by the regulatory subunit pan3. Catalytic subunit of the poly(A)-nuclease (PAN) deadenylation complex, one of two cytoplasmic mRNA deadenylases involved in mRNA turnover. PAN specifically shortens poly(A) tails of RNA and the activity is stimulated by poly(A)-binding protein pab1. PAN deadenylation is followed by rapid degradation of the shortened mRNA tails by the CCR4-NOT complex. Deadenylated mRNAs are then degraded by two alternative mechanisms, namely exosome-mediated 3'-5' exonucleolytic degradation, or deadenylation-dependent mRNA decaping and subsequent 5'-3' exonucleolytic degradation by xrn1. May also be involved in post-transcriptional maturation of mRNA poly(A) tails. The protein is PAN2-PAN3 deadenylation complex catalytic subunit pan2 of Aspergillus terreus (strain NIH 2624 / FGSC A1156).